A 168-amino-acid polypeptide reads, in one-letter code: Photosystem I assembly protein Ycf3 (168 aa).

3 TPR repeats span residues 35–68, 72–105, and 120–153; these read AFTY…EIDP, SYIL…NPFL, and GEQA…TPGN.

The protein belongs to the Ycf3 family.

It localises to the plastid. The protein resides in the chloroplast thylakoid membrane. Its function is as follows. Essential for the assembly of the photosystem I (PSI) complex. May act as a chaperone-like factor to guide the assembly of the PSI subunits. The protein is Photosystem I assembly protein Ycf3 of Coffea arabica (Arabian coffee).